The sequence spans 252 residues: Indole-3-glycerol phosphate synthase (252 aa).

The protein belongs to the TrpC family.

The enzyme catalyses 1-(2-carboxyphenylamino)-1-deoxy-D-ribulose 5-phosphate + H(+) = (1S,2R)-1-C-(indol-3-yl)glycerol 3-phosphate + CO2 + H2O. It participates in amino-acid biosynthesis; L-tryptophan biosynthesis; L-tryptophan from chorismate: step 4/5. The chain is Indole-3-glycerol phosphate synthase from Leptospira interrogans serogroup Icterohaemorrhagiae serovar copenhageni (strain Fiocruz L1-130).